The sequence spans 1661 residues: ATP-dependent bile acid permease (1661 aa).

Topologically, residues 1-33 (MHHVLNSTRPDHRFWFYDDVTQYGRTKYLNYYT) are lumenal. Asn-6 carries an N-linked (GlcNAc...) asparagine glycan. Residues 34–54 (PLVLLIFTVLFITYNIWKHYY) traverse the membrane as a helical segment. At 55–74 (YYDVLHLKQKNPIDELLYSS) the chain is on the cytoplasmic side. Residues 75-95 (TDEDEQSPLINNNTITTNYVD) form a helical membrane-spanning segment. The Lumenal portion of the chain corresponds to 96–133 (NNCTKDALKNRHFSLEKLKSVKVNGEPHGTPEIVRRGF). Asn-97 carries N-linked (GlcNAc...) asparagine glycosylation. Residues 134–154 (IEKSRIILEFFLVLSQVIIHS) form a helical membrane-spanning segment. Residues 155–166 (FILLHYVNKNPE) are Cytoplasmic-facing. A helical transmembrane segment spans residues 167–187 (FTQQGTITGLVEWCALFIIVS). Residues 188–205 (LRLANVNQNFKFINKYPG) are Lumenal-facing. The helical transmembrane segment at 206–226 (NLWSVSFINYLALFISMILPF) threads the bilayer. Residues 227–345 (RSIFIHHINS…VKRKRIFSLN (119 aa)) lie on the Cytoplasmic side of the membrane. Residues 346–366 (LFFFFSNYLVLQCFWAFLGSV) traverse the membrane as a helical segment. The ABC transmembrane type-1 1 domain occupies 354-662 (LVLQCFWAFL…LSDMLSFVVQ (309 aa)). Topologically, residues 367–393 (LSFIPTVLLKRILEYVEDQSSAPSNLA) are lumenal. A helical transmembrane segment spans residues 394–414 (WFYVTVMFVGRILVAICQAQA). The Cytoplasmic portion of the chain corresponds to 415 to 495 (LFFGRRVCIR…AFKVSEICGY (81 aa)). Residues 445–468 (NKTKPSNEDPQEINDQKSINGDEE) are disordered. The chain crosses the membrane as a helical span at residues 496–516 (LHSFLEAFVMTVVALALLYRL). Residues 517–519 (LGF) are Lumenal-facing. Residues 520-540 (AAIVGVLIIVAMLPLNYKLAK) form a helical membrane-spanning segment. Residues 541-602 (YIGDLQKKNL…LLLMRSIVWS (62 aa)) lie on the Cytoplasmic side of the membrane. Residues 603–623 (ISSFLWFVTPTIVTAASFAYY) traverse the membrane as a helical segment. The Lumenal portion of the chain corresponds to 624 to 644 (IYVQGEVLTTPVAFTALSLFT). A helical transmembrane segment spans residues 645 to 665 (LLRDPLDRLSDMLSFVVQSKV). Residues 666-1053 (SLDRVQDFLN…SWWVRAWASH (388 aa)) lie on the Cytoplasmic side of the membrane. In terms of domain architecture, ABC transporter 1 spans 694–935 (FAFENSTISW…GLFGEDELVK (242 aa)). 729–736 (GPTGSGKT) serves as a coordination point for ATP. A phosphoserine mark is found at Ser-936, Ser-940, and Ser-955. The region spanning 1026–1345 (VSFLASLFLI…LVRLYSEVEM (320 aa)) is the ABC transmembrane type-1 2 domain. The chain crosses the membrane as a helical span at residues 1054-1074 (NVIAKIIPRAQRAIAFISKKA). At 1075–1114 (SHLIDWRGSSQISMASAENQPSSGHSTMYYLVLYLIIGFA) the chain is on the lumenal side. The chain crosses the membrane as a helical span at residues 1115 to 1135 (QALLGAGKTILNFVAGINASR). Over 1136-1178 (KIFNMILNKVLHSKIRFFDATPTGRIMNRFSKDIEAIDQELTP) the chain is Cytoplasmic. A helical membrane pass occupies residues 1179–1199 (YIQGAFYSLIECLSTVILITF). A topological domain (lumenal) is located at residue Ile-1200. A helical transmembrane segment spans residues 1201-1221 (TPQFLSVAIVVSILYYFVGYF). Over 1222–1292 (YMAGSRELKR…VANRWLAFRI (71 aa)) the chain is Cytoplasmic. Residues 1293–1313 (DMIGSLVIFGAGLFILFNINN) traverse the membrane as a helical segment. Over 1314 to 1315 (LD) the chain is Lumenal. The helical transmembrane segment at 1316-1336 (SGMAGISLTYAISFTEGALWL) threads the bilayer. Residues 1337-1661 (VRLYSEVEMN…FVEKLNSKKD (325 aa)) lie on the Cytoplasmic side of the membrane. The 256-residue stretch at 1381–1636 (IEVNDLSLRY…KQSAFYSMCE (256 aa)) folds into the ABC transporter 2 domain. Residue 1415–1422 (GRTGAGKS) participates in ATP binding.

The protein belongs to the ABC transporter superfamily. ABCC family. Conjugate transporter (TC 3.A.1.208) subfamily.

It localises to the vacuole membrane. Functionally, vacuolar class C ABC transporter which regulates the translocation of phosphatidylcholine to the vacuole lumen, the release of lumenal calcium stores, and acts as a negative regulator of vacuole fusion. Exhibits ATP-dependent bile acid transport. This chain is ATP-dependent bile acid permease (YBT1), found in Saccharomyces cerevisiae (strain ATCC 204508 / S288c) (Baker's yeast).